The sequence spans 1396 residues: DNA-directed RNA polymerase subunit beta' (1396 aa).

C70, C72, C85, and C88 together coordinate Zn(2+). Mg(2+)-binding residues include D460, D462, and D464. Zn(2+)-binding residues include C814, C888, C895, and C898.

The protein belongs to the RNA polymerase beta' chain family. As to quaternary structure, the RNAP catalytic core consists of 2 alpha, 1 beta, 1 beta' and 1 omega subunit. When a sigma factor is associated with the core the holoenzyme is formed, which can initiate transcription. Mg(2+) serves as cofactor. The cofactor is Zn(2+).

It catalyses the reaction RNA(n) + a ribonucleoside 5'-triphosphate = RNA(n+1) + diphosphate. Its function is as follows. DNA-dependent RNA polymerase catalyzes the transcription of DNA into RNA using the four ribonucleoside triphosphates as substrates. The sequence is that of DNA-directed RNA polymerase subunit beta' from Chromobacterium violaceum (strain ATCC 12472 / DSM 30191 / JCM 1249 / CCUG 213 / NBRC 12614 / NCIMB 9131 / NCTC 9757 / MK).